The sequence spans 283 residues: Acetyl-coenzyme A carboxylase carboxyl transferase subunit beta (283 aa).

One can recognise a CoA carboxyltransferase N-terminal domain in the interval 23–283; that stretch reads LWIKCPSCSE…DFLMAGKAAA (261 aa). The Zn(2+) site is built by Cys27, Cys30, Cys46, and Cys49. The C4-type zinc finger occupies 27–49; that stretch reads CPSCSEMLFTKEYEDNLSVCPHC.

This sequence belongs to the AccD/PCCB family. As to quaternary structure, acetyl-CoA carboxylase is a heterohexamer composed of biotin carboxyl carrier protein (AccB), biotin carboxylase (AccC) and two subunits each of ACCase subunit alpha (AccA) and ACCase subunit beta (AccD). Zn(2+) is required as a cofactor.

The protein localises to the cytoplasm. The enzyme catalyses N(6)-carboxybiotinyl-L-lysyl-[protein] + acetyl-CoA = N(6)-biotinyl-L-lysyl-[protein] + malonyl-CoA. It functions in the pathway lipid metabolism; malonyl-CoA biosynthesis; malonyl-CoA from acetyl-CoA: step 1/1. Its function is as follows. Component of the acetyl coenzyme A carboxylase (ACC) complex. Biotin carboxylase (BC) catalyzes the carboxylation of biotin on its carrier protein (BCCP) and then the CO(2) group is transferred by the transcarboxylase to acetyl-CoA to form malonyl-CoA. The protein is Acetyl-coenzyme A carboxylase carboxyl transferase subunit beta of Novosphingobium aromaticivorans (strain ATCC 700278 / DSM 12444 / CCUG 56034 / CIP 105152 / NBRC 16084 / F199).